The primary structure comprises 3380 residues: Apolipophorins (3380 aa).

An N-terminal signal peptide occupies residues 1–21 (MGTPPHIWFLLILAISSGGLS). The Vitellogenin domain occupies 40–646 (YQKGQTYTYS…SQSSYLPRSV (607 aa)). Residues N132, N649, N969, N2174, N2851, and N3177 are each glycosylated (N-linked (GlcNAc...) asparagine). One can recognise a VWFD domain in the interval 2815-2979 (ATAILLNSHH…NAWKVDAQCA (165 aa)). A disulfide bridge connects residues C2839 and C2978.

Post-translationally, cleaved into 2 chains by furin protease. However, prevention of cleavage does not impair its function. In terms of processing, N-glycosylated. In terms of tissue distribution, present in brain, hemolymph, fat body and eyes.

The protein resides in the secreted. In terms of biological role, constitutes the major component of lipophorin, which mediates transport for various types of lipids in hemolymph. Acts by forming lipoprotein particles that bind lipoproteins and lipids. May be required for morphogens wingless (wg) and hedgehog (hh) function, possibly by acting as vehicles for the movement of wg and hh. This is Apolipophorins from Locusta migratoria (Migratory locust).